We begin with the raw amino-acid sequence, 283 residues long: tRNA-cytidine(32) 2-sulfurtransferase (283 aa).

A PP-loop motif motif is present at residues 32 to 37 (SGGKDS). Positions 107, 110, and 198 each coordinate [4Fe-4S] cluster.

The protein belongs to the TtcA family. In terms of assembly, homodimer. Requires Mg(2+) as cofactor. The cofactor is [4Fe-4S] cluster.

The protein resides in the cytoplasm. It catalyses the reaction cytidine(32) in tRNA + S-sulfanyl-L-cysteinyl-[cysteine desulfurase] + AH2 + ATP = 2-thiocytidine(32) in tRNA + L-cysteinyl-[cysteine desulfurase] + A + AMP + diphosphate + H(+). The protein operates within tRNA modification. Its function is as follows. Catalyzes the ATP-dependent 2-thiolation of cytidine in position 32 of tRNA, to form 2-thiocytidine (s(2)C32). The sulfur atoms are provided by the cysteine/cysteine desulfurase (IscS) system. The chain is tRNA-cytidine(32) 2-sulfurtransferase from Sorangium cellulosum (strain So ce56) (Polyangium cellulosum (strain So ce56)).